A 366-amino-acid chain; its full sequence is Chorismate synthase (366 aa).

Arginine 48 and arginine 54 together coordinate NADP(+). Residues arginine 125–serine 127, asparagine 238–alanine 239, glycine 278, lysine 293–serine 297, and arginine 319 contribute to the FMN site.

The protein belongs to the chorismate synthase family. In terms of assembly, homotetramer. FMNH2 serves as cofactor.

It catalyses the reaction 5-O-(1-carboxyvinyl)-3-phosphoshikimate = chorismate + phosphate. The protein operates within metabolic intermediate biosynthesis; chorismate biosynthesis; chorismate from D-erythrose 4-phosphate and phosphoenolpyruvate: step 7/7. Functionally, catalyzes the anti-1,4-elimination of the C-3 phosphate and the C-6 proR hydrogen from 5-enolpyruvylshikimate-3-phosphate (EPSP) to yield chorismate, which is the branch point compound that serves as the starting substrate for the three terminal pathways of aromatic amino acid biosynthesis. This reaction introduces a second double bond into the aromatic ring system. The protein is Chorismate synthase of Burkholderia ambifaria (strain MC40-6).